The primary structure comprises 206 residues: Large ribosomal subunit protein uL4 (206 aa).

A disordered region spans residues 42–93 (KKQQGTHKTKNRSEVSRTGAKMYKQKGTGRARHHSARAPQFRGGGKAHGPVV). Residues 64-77 (YKQKGTGRARHHSA) are compositionally biased toward basic residues.

Belongs to the universal ribosomal protein uL4 family. As to quaternary structure, part of the 50S ribosomal subunit.

One of the primary rRNA binding proteins, this protein initially binds near the 5'-end of the 23S rRNA. It is important during the early stages of 50S assembly. It makes multiple contacts with different domains of the 23S rRNA in the assembled 50S subunit and ribosome. In terms of biological role, forms part of the polypeptide exit tunnel. This chain is Large ribosomal subunit protein uL4, found in Agrobacterium fabrum (strain C58 / ATCC 33970) (Agrobacterium tumefaciens (strain C58)).